Here is a 94-residue protein sequence, read N- to C-terminus: Large ribosomal subunit protein bL27 (94 aa).

The propeptide occupies 1–9; that stretch reads MLRLDLQFF.

The protein belongs to the bacterial ribosomal protein bL27 family. In terms of assembly, part of the 50S ribosomal subunit. The N-terminus is cleaved by ribosomal processing cysteine protease Prp.

Its function is as follows. Plays a role in sporulation at high temperatures. This is Large ribosomal subunit protein bL27 (rpmA) from Bacillus subtilis (strain 168).